Consider the following 346-residue polypeptide: Sensor protein kinase GraS (346 aa).

The next 2 helical transmembrane spans lie at 15–35 (MNWI…SLID) and 43–63 (LFYI…LTYF). The region spanning 126–332 (EFVHDIKTPV…TVRLIFPLQN (207 aa)) is the Histidine kinase domain.

Interacts with GraX.

The protein resides in the cell membrane. The catalysed reaction is ATP + protein L-histidine = ADP + protein N-phospho-L-histidine.. In terms of biological role, member of the two-component regulatory system GraR/GraS involved in resistance against cationic antimicrobial peptides (CAMPs). Functions as a sensor protein kinase which phosphorylates GraR through the auxiliary protein GraX. In turn, GraR up-regulates many genes such as adhesins, exoproteins, transporters, toxins, and proteins involved in cell wall synthesis. Down-regulates the expression of many genes involved in RNA and amino acid synthesis or glycolysis. This chain is Sensor protein kinase GraS (graS), found in Staphylococcus aureus (strain bovine RF122 / ET3-1).